The primary structure comprises 343 residues: Endoglucanase C (343 aa).

Residue Glu-140 is the Proton donor of the active site. Glu-280 (nucleophile) is an active-site residue.

This sequence belongs to the glycosyl hydrolase 5 (cellulase A) family.

The enzyme catalyses Endohydrolysis of (1-&gt;4)-beta-D-glucosidic linkages in cellulose, lichenin and cereal beta-D-glucans.. Its pathway is glycan metabolism; cellulose degradation. Functionally, this enzyme catalyzes the endohydrolysis of 1,4-beta-glucosidic linkages in cellulose, lichenin and cereal beta-D-glucans. The sequence is that of Endoglucanase C (celC) from Acetivibrio thermocellus (strain ATCC 27405 / DSM 1237 / JCM 9322 / NBRC 103400 / NCIMB 10682 / NRRL B-4536 / VPI 7372) (Clostridium thermocellum).